A 480-amino-acid chain; its full sequence is Glycogen synthase 1 (480 aa).

Lys15 is a binding site for ADP-alpha-D-glucose.

The protein belongs to the glycosyltransferase 1 family. Bacterial/plant glycogen synthase subfamily.

It catalyses the reaction [(1-&gt;4)-alpha-D-glucosyl](n) + ADP-alpha-D-glucose = [(1-&gt;4)-alpha-D-glucosyl](n+1) + ADP + H(+). Its pathway is glycan biosynthesis; glycogen biosynthesis. Synthesizes alpha-1,4-glucan chains using ADP-glucose. This is Glycogen synthase 1 (glgA1) from Rhizobium radiobacter (Agrobacterium tumefaciens).